Here is a 480-residue protein sequence, read N- to C-terminus: Probable pectin lyase F-2 (480 aa).

Positions 1-25 (MTLIRTVLMAAALLGASAHAQGVVG) are cleaved as a signal peptide. Cysteine 83 and cysteine 106 are oxidised to a cystine. Residue asparagine 111 is glycosylated (N-linked (GlcNAc...) asparagine). The active site involves arginine 256. Cysteine 322 and cysteine 330 are disulfide-bonded. Low complexity predominate over residues 386–401 (SSSAIPSSTPAPSSSA). The disordered stretch occupies residues 386–436 (SSSAIPSSTPAPSSSALAKRHGGHDRHGLGHIPHLTEGGPGAWHTPGPAPS).

Belongs to the polysaccharide lyase 1 family.

It is found in the secreted. It catalyses the reaction Eliminative cleavage of (1-&gt;4)-alpha-D-galacturonan methyl ester to give oligosaccharides with 4-deoxy-6-O-methyl-alpha-D-galact-4-enuronosyl groups at their non-reducing ends.. Its function is as follows. Pectinolytic enzymes consist of four classes of enzymes: pectin lyase, polygalacturonase, pectin methylesterase and rhamnogalacturonase. Among pectinolytic enzymes, pectin lyase is the most important in depolymerization of pectin, since it cleaves internal glycosidic bonds of highly methylated pectins. This Aspergillus terreus (strain NIH 2624 / FGSC A1156) protein is Probable pectin lyase F-2 (pelF-2).